A 226-amino-acid polypeptide reads, in one-letter code: MEKLTTITATGVPLRRSNVDTDQIIPAVFLKRVTRTGFDDALFYAWRRDPNFVLNQPEYRDGRILVAGPDFGIGSSREHAVWALHDYGFRVVIASRFADIFYGNTAKNGVLAAIMPQESIELIWKMLEEEPGRQMTVDLETRTVTIDDVVLPFEVNDYVRWRLMNGYDDIDLTLQHEDDIAAYERMRAEKFPFKPKTLPAITEEAETVESAREPEAVEWAGPLADR.

A disordered region spans residues 204–226 (EAETVESAREPEAVEWAGPLADR).

This sequence belongs to the LeuD family. LeuD type 1 subfamily. In terms of assembly, heterodimer of LeuC and LeuD.

It catalyses the reaction (2R,3S)-3-isopropylmalate = (2S)-2-isopropylmalate. The protein operates within amino-acid biosynthesis; L-leucine biosynthesis; L-leucine from 3-methyl-2-oxobutanoate: step 2/4. Catalyzes the isomerization between 2-isopropylmalate and 3-isopropylmalate, via the formation of 2-isopropylmaleate. This Bifidobacterium animalis subsp. lactis (strain AD011) protein is 3-isopropylmalate dehydratase small subunit.